Here is a 192-residue protein sequence, read N- to C-terminus: Adenylate kinase (192 aa).

10–15 (GSGKGT) provides a ligand contact to ATP. Residues 30 to 59 (STGDMLREVISRETEVGRKAKAIINAGALV) form an NMP region. AMP is bound by residues T31, R36, 57–59 (ALV), 85–88 (GYPR), and Q92. The segment at 126-142 (KRVQETIAVGGQVRSDD) is LID. R127 contributes to the ATP binding site. Residues R139 and R150 each contribute to the AMP site. ATP is bound at residue M178.

Belongs to the adenylate kinase family. Monomer.

It localises to the cytoplasm. The catalysed reaction is AMP + ATP = 2 ADP. It participates in purine metabolism; AMP biosynthesis via salvage pathway; AMP from ADP: step 1/1. Functionally, catalyzes the reversible transfer of the terminal phosphate group between ATP and AMP. Plays an important role in cellular energy homeostasis and in adenine nucleotide metabolism. The sequence is that of Adenylate kinase from Bartonella quintana (strain Toulouse) (Rochalimaea quintana).